The primary structure comprises 516 residues: MPRRKQARRTTVRDIRTILRLTHEEGLSVREIAERLKIGKSSVSTYLLRSREAGLSWPLPIGADEDAKLERRLFGRAGRPPRDLSEPDWALVVRELKRKGVTLTLLWQEYRASHPDGYGFTWFCEQVAAFRQRTSVAFRNRHAAGAVMQTDYAGPTVPVIDPATGVIHPAQIFVAVLGASNLTFAHASFSQQLPDWIDGQVRALTFYGGVTKAIVCDNLKSGVAKALWFEPTLTATFAAMAEHYDTTILPTRSRKPRDKGRVEGAVLIVERWILARLRNRTFFSLAALNTAIAELLEDLNNRTMRHVGKSRRELFEEIERPALKPLPAIPFEYAEWKSAKVHPDYHVEVDKTFYSVPHRLIGCTLQVRLTHRVVEIFHDHQRVASHVRRSQRSGHVTVNDHMPKAHQRYANTTPANLIGRATQIGPNAAILVERMMRDRPHPEQGYRSAMGILSLAPRYGSQRLEAACERALTINAITYSSVASILKSGLDRERPQAEHAAPTPAHTNIRGRSYYQ.

Residues 15–96 (IRTILRLTHE…PDWALVVREL (82 aa)) enclose the HTH IS408-type domain. In terms of domain architecture, Integrase catalytic spans 138–319 (FRNRHAAGAV…SRRELFEEIE (182 aa)). Residues 493-516 (ERPQAEHAAPTPAHTNIRGRSYYQ) form a disordered region.

It belongs to the transposase IS21/IS408/IS1162 family.

The sequence is that of Putative transposase y4bL/y4kJ/y4tB from Sinorhizobium fredii (strain NBRC 101917 / NGR234).